A 370-amino-acid chain; its full sequence is Probable endopolygalacturonase A (370 aa).

Residues 1 to 19 form the signal peptide; sequence MPSAKPLFCLATLAGAALA. Positions 20-32 are excised as a propeptide; the sequence is APAPSRVSDFTKR. An intrachain disulfide couples cysteine 35 to cysteine 50. PbH1 repeat units follow at residues 162-192, 193-214, 215-235, 244-265, 273-295, and 307-352; these read SDNL…DISE, STYI…AINS, GENI…SIGS, VKNV…RIKT, VEDI…VIEQ, and SNGV…DITG. The active-site Proton donor is aspartate 207. An intrachain disulfide couples cysteine 209 to cysteine 225. Histidine 229 is a catalytic residue. An N-linked (GlcNAc...) asparagine glycan is attached at asparagine 246. 2 cysteine pairs are disulfide-bonded: cysteine 335–cysteine 340 and cysteine 359–cysteine 368.

Belongs to the glycosyl hydrolase 28 family.

The protein resides in the secreted. It catalyses the reaction (1,4-alpha-D-galacturonosyl)n+m + H2O = (1,4-alpha-D-galacturonosyl)n + (1,4-alpha-D-galacturonosyl)m.. Involved in maceration and soft-rotting of plant tissue. Hydrolyzes the 1,4-alpha glycosidic bonds of de-esterified pectate in the smooth region of the plant cell wall. In Aspergillus niger (strain ATCC MYA-4892 / CBS 513.88 / FGSC A1513), this protein is Probable endopolygalacturonase A (pgaA).